The sequence spans 248 residues: uncharacterized protein (248 aa).

Serine 141 is a substrate binding site. Tyrosine 154 acts as the Proton acceptor in catalysis.

This sequence belongs to the short-chain dehydrogenases/reductases (SDR) family.

This is an uncharacterized protein from Methylorubrum extorquens (strain ATCC 14718 / DSM 1338 / JCM 2805 / NCIMB 9133 / AM1) (Methylobacterium extorquens).